The primary structure comprises 387 residues: Mannitol-1-phosphate 5-dehydrogenase (387 aa).

Residue 3–14 (ALHFGAGNIGRG) coordinates NAD(+).

The protein belongs to the mannitol dehydrogenase family.

The catalysed reaction is D-mannitol 1-phosphate + NAD(+) = beta-D-fructose 6-phosphate + NADH + H(+). This is Mannitol-1-phosphate 5-dehydrogenase from Yersinia pestis bv. Antiqua (strain Antiqua).